A 268-amino-acid polypeptide reads, in one-letter code: Undecaprenyl-diphosphatase (268 aa).

A run of 8 helical transmembrane segments spans residues 3-23 (VFNL…EFIP), 46-66 (FEVL…SAKL), 84-104 (FGIL…HGFI), 107-127 (VLFE…FILL), 144-164 (YPLP…IPGV), 184-204 (AAEF…AYDL), 218-238 (LIGV…RYLL), and 248-268 (LFGW…LVWG).

The protein belongs to the UppP family.

The protein resides in the cell inner membrane. It catalyses the reaction di-trans,octa-cis-undecaprenyl diphosphate + H2O = di-trans,octa-cis-undecaprenyl phosphate + phosphate + H(+). Catalyzes the dephosphorylation of undecaprenyl diphosphate (UPP). Confers resistance to bacitracin. This is Undecaprenyl-diphosphatase from Brucella anthropi (strain ATCC 49188 / DSM 6882 / CCUG 24695 / JCM 21032 / LMG 3331 / NBRC 15819 / NCTC 12168 / Alc 37) (Ochrobactrum anthropi).